Consider the following 84-residue polypeptide: Small ribosomal subunit protein bS16c (84 aa).

It belongs to the bacterial ribosomal protein bS16 family.

It localises to the plastid. Its subcellular location is the chloroplast. This chain is Small ribosomal subunit protein bS16c, found in Mesostigma viride (Green alga).